The following is a 406-amino-acid chain: Histidine--tRNA ligase (406 aa).

Belongs to the class-II aminoacyl-tRNA synthetase family. As to quaternary structure, homodimer.

The protein resides in the cytoplasm. It catalyses the reaction tRNA(His) + L-histidine + ATP = L-histidyl-tRNA(His) + AMP + diphosphate + H(+). The sequence is that of Histidine--tRNA ligase from Nitratiruptor sp. (strain SB155-2).